The sequence spans 341 residues: S-adenosylmethionine:tRNA ribosyltransferase-isomerase (341 aa).

It belongs to the QueA family. Monomer.

The protein resides in the cytoplasm. It catalyses the reaction 7-aminomethyl-7-carbaguanosine(34) in tRNA + S-adenosyl-L-methionine = epoxyqueuosine(34) in tRNA + adenine + L-methionine + 2 H(+). Its pathway is tRNA modification; tRNA-queuosine biosynthesis. In terms of biological role, transfers and isomerizes the ribose moiety from AdoMet to the 7-aminomethyl group of 7-deazaguanine (preQ1-tRNA) to give epoxyqueuosine (oQ-tRNA). In Clostridium beijerinckii (strain ATCC 51743 / NCIMB 8052) (Clostridium acetobutylicum), this protein is S-adenosylmethionine:tRNA ribosyltransferase-isomerase.